The following is a 360-amino-acid chain: Ribosomal RNA large subunit methyltransferase F (360 aa).

A disordered region spans residues 1-36 (MSKLISKQGKRPALSQSGLAKPSTSKKSSASKNANT). Over residues 23–36 (STSKKSSASKNANT) the composition is skewed to low complexity.

The protein belongs to the methyltransferase superfamily. METTL16/RlmF family.

The protein localises to the cytoplasm. It catalyses the reaction adenosine(1618) in 23S rRNA + S-adenosyl-L-methionine = N(6)-methyladenosine(1618) in 23S rRNA + S-adenosyl-L-homocysteine + H(+). Specifically methylates the adenine in position 1618 of 23S rRNA. The sequence is that of Ribosomal RNA large subunit methyltransferase F from Shewanella denitrificans (strain OS217 / ATCC BAA-1090 / DSM 15013).